The sequence spans 310 residues: Beta-ketoacyl-[acyl-carrier-protein] synthase III (310 aa).

Residues Cys-116 and His-239 contribute to the active site. Positions 240–244 (QANYR) are ACP-binding. Asn-269 is a catalytic residue.

Belongs to the thiolase-like superfamily. FabH family. In terms of assembly, homodimer.

It localises to the cytoplasm. The catalysed reaction is malonyl-[ACP] + acetyl-CoA + H(+) = 3-oxobutanoyl-[ACP] + CO2 + CoA. The protein operates within lipid metabolism; fatty acid biosynthesis. Functionally, catalyzes the condensation reaction of fatty acid synthesis by the addition to an acyl acceptor of two carbons from malonyl-ACP. Catalyzes the first condensation reaction which initiates fatty acid synthesis and may therefore play a role in governing the total rate of fatty acid production. Possesses both acetoacetyl-ACP synthase and acetyl transacylase activities. Its substrate specificity determines the biosynthesis of branched-chain and/or straight-chain of fatty acids. This is Beta-ketoacyl-[acyl-carrier-protein] synthase III from Acholeplasma laidlawii (strain PG-8A).